Reading from the N-terminus, the 423-residue chain is Gamma-glutamyl phosphate reductase (423 aa).

Belongs to the gamma-glutamyl phosphate reductase family.

Its subcellular location is the cytoplasm. It catalyses the reaction L-glutamate 5-semialdehyde + phosphate + NADP(+) = L-glutamyl 5-phosphate + NADPH + H(+). It participates in amino-acid biosynthesis; L-proline biosynthesis; L-glutamate 5-semialdehyde from L-glutamate: step 2/2. Functionally, catalyzes the NADPH-dependent reduction of L-glutamate 5-phosphate into L-glutamate 5-semialdehyde and phosphate. The product spontaneously undergoes cyclization to form 1-pyrroline-5-carboxylate. In Burkholderia vietnamiensis (strain G4 / LMG 22486) (Burkholderia cepacia (strain R1808)), this protein is Gamma-glutamyl phosphate reductase.